The following is a 1505-amino-acid chain: Synaptonemal complex protein 2 (1505 aa).

A disordered region spans residues glutamate 439–isoleucine 483. Phosphoserine occurs at positions 457 and 465. Threonine 471 is modified (phosphothreonine). Serine 494 carries the post-translational modification Phosphoserine. Phosphothreonine is present on threonine 503. 4 positions are modified to phosphoserine: serine 507, serine 516, serine 525, and serine 534. A disordered region spans residues lysine 536–glutamine 571. Residues threonine 613 and threonine 638 each carry the phosphothreonine modification. Serine 651, serine 655, and serine 746 each carry phosphoserine. The segment at lysine 745–serine 764 is disordered. Residues serine 748 to serine 758 are compositionally biased toward basic residues. Phosphoserine is present on serine 920. Position 922 is a phosphothreonine (threonine 922). 2 disordered regions span residues tyrosine 949–serine 974 and lysine 1035–glutamate 1080. The segment covering lysine 953 to lysine 962 has biased composition (basic residues). A phosphoserine mark is found at serine 1121, serine 1123, serine 1130, serine 1146, serine 1150, serine 1162, serine 1165, and serine 1170. Threonine 1174 bears the Phosphothreonine mark. Residue serine 1188 is modified to Phosphoserine. The interval asparagine 1199–phenylalanine 1239 is disordered. Positions serine 1200–serine 1209 are enriched in low complexity. Phosphoserine is present on residues serine 1218 and serine 1221. Over residues cysteine 1222–histidine 1234 the composition is skewed to basic and acidic residues. A phosphoserine mark is found at serine 1237, serine 1280, and serine 1283. Threonine 1318 is subject to Phosphothreonine. Positions glutamate 1384–arginine 1435 form a coiled coil.

Belongs to the SYCP2 family. Component of the lateral elements of synaptonemal complexes. Interacts with TEX11. Heterodimer with SYCP3. Interacts with SYCP3, SMC1A and SMC3. In terms of processing, phosphorylated. Detected in spermatocytes and testis (at protein level). Spermatocytes and oocytes. Meiotic prophase cells.

Its subcellular location is the nucleus. It is found in the chromosome. In terms of biological role, major component of the axial/lateral elements of synaptonemal complexes (SCS) during meiotic prophase. Plays a role in the assembly of synaptonemal complexes. Required for normal meiotic chromosome synapsis during oocyte and spermatocyte development and for normal male and female fertility. Required for insertion of SYCP3 into synaptonemal complexes. May be involved in the organization of chromatin by temporarily binding to DNA scaffold attachment regions. Requires SYCP3, but not SYCP1, in order to be incorporated into the axial/lateral elements. The polypeptide is Synaptonemal complex protein 2 (Sycp2) (Rattus norvegicus (Rat)).